We begin with the raw amino-acid sequence, 551 residues long: MRAKKQLLAALQDIVKDMGLAWPEKATIDTPKATGFGDLAANIALVLAKQAGQNPRELATRIADALRNRDADITAIDIAGPGFLNVTYSQDFWRETILRAQEAGSAFGSSDTGAGRKVQVEYVSANPTGPLHIGHGRGAAVGDSLARIMRFAGYDVSTEYYINDAGRQMRLLGLSVWVRAKELAGRPVTLPEDFYRGDYIKDIARELMEKEPGLLDLDDAAGEDRCFAYAMNSILDGIKQDLADFRVEHQVWFSERSLVEGGAVEKTFNRLKEAGLAFEQDGALWFRTTDFGDDKDRVLRKSDGTLTYFSSDIAYHDNKYDRGFDLVVDIWGADHHGYIPRMRAAVAALGRKPEAFDVVLIQLVNLLRGGELVAMSTRAGQFETLADVVKETGADAARFMFLSRKSDSPLDFDLELVKQRTMDNPVYYVQYAHARVCSVLRKAAERGIEMPAQLDGASLAPLSGDDEMELLRLLDRFEETVAGAATALAPHHISHYLMEVAGALHSYYARQPILNATEQDVIVPRLALLRAVGCVLANGLSLLGVSAPESM.

A 'HIGH' region motif is present at residues 125 to 135 (ANPTGPLHIGH).

It belongs to the class-I aminoacyl-tRNA synthetase family. Monomer.

It localises to the cytoplasm. The catalysed reaction is tRNA(Arg) + L-arginine + ATP = L-arginyl-tRNA(Arg) + AMP + diphosphate. The polypeptide is Arginine--tRNA ligase (Nitratidesulfovibrio vulgaris (strain DP4) (Desulfovibrio vulgaris)).